We begin with the raw amino-acid sequence, 273 residues long: 4-hydroxy-tetrahydrodipicolinate reductase (273 aa).

12–17 provides a ligand contact to NAD(+); it reads GAGGRM. NADP(+) is bound at residue Arg-39. NAD(+) is bound by residues 102–104 and 126–129; these read GTT and AANF. His-159 (proton donor/acceptor) is an active-site residue. His-160 lines the (S)-2,3,4,5-tetrahydrodipicolinate pocket. The active-site Proton donor is Lys-163. Residue 169–170 coordinates (S)-2,3,4,5-tetrahydrodipicolinate; that stretch reads GT.

Belongs to the DapB family. In terms of assembly, homotetramer.

It is found in the cytoplasm. The enzyme catalyses (S)-2,3,4,5-tetrahydrodipicolinate + NAD(+) + H2O = (2S,4S)-4-hydroxy-2,3,4,5-tetrahydrodipicolinate + NADH + H(+). The catalysed reaction is (S)-2,3,4,5-tetrahydrodipicolinate + NADP(+) + H2O = (2S,4S)-4-hydroxy-2,3,4,5-tetrahydrodipicolinate + NADPH + H(+). The protein operates within amino-acid biosynthesis; L-lysine biosynthesis via DAP pathway; (S)-tetrahydrodipicolinate from L-aspartate: step 4/4. Its function is as follows. Catalyzes the conversion of 4-hydroxy-tetrahydrodipicolinate (HTPA) to tetrahydrodipicolinate. This Sodalis glossinidius (strain morsitans) protein is 4-hydroxy-tetrahydrodipicolinate reductase.